We begin with the raw amino-acid sequence, 131 residues long: MAQIDVDVFTAKVLSHWDWSREDRSFGDSASSPESESFDSACSSPDARSSPTAGCEHAEQQKPKVKMSMRRRMKASEREKLRMRSLAEALHQLRDYLPPGYSRRGQPLTKIQTLKYTIQYIKELSGILEQQ.

Positions 22–79 (EDRSFGDSASSPESESFDSACSSPDARSSPTAGCEHAEQQKPKVKMSMRRRMKASERE) are disordered. A compositionally biased stretch (low complexity) spans 27–45 (GDSASSPESESFDSACSSP). A compositionally biased stretch (basic residues) spans 63–73 (PKVKMSMRRRM). The bHLH domain maps to 70–124 (RRRMKASEREKLRMRSLAEALHQLRDYLPPGYSRRGQPLTKIQTLKYTIQYIKEL).

Coexpression of ntl and spt is required for expression.

It localises to the nucleus. Functionally, involved in specifying the paraxial, but not dorsal, mesoderm. May regulate the expression of T-box transcription factors required for mesoderm formation and differentiation. The protein is Mesogenin-1 (msgn1) of Danio rerio (Zebrafish).